The sequence spans 621 residues: tRNA uridine 5-carboxymethylaminomethyl modification enzyme MnmG (621 aa).

Gly-8–Gly-13 is an FAD binding site. Position 269–283 (Gly-269–Phe-283) interacts with NAD(+).

Belongs to the MnmG family. Homodimer. Heterotetramer of two MnmE and two MnmG subunits. FAD is required as a cofactor.

Its subcellular location is the cytoplasm. Its function is as follows. NAD-binding protein involved in the addition of a carboxymethylaminomethyl (cmnm) group at the wobble position (U34) of certain tRNAs, forming tRNA-cmnm(5)s(2)U34. This is tRNA uridine 5-carboxymethylaminomethyl modification enzyme MnmG from Chlorobium phaeovibrioides (strain DSM 265 / 1930) (Prosthecochloris vibrioformis (strain DSM 265)).